The chain runs to 223 residues: Urease accessory protein UreG (223 aa).

A disordered region spans residues 1–31; the sequence is MAKHSHDHTHDHHDRPRRVRKPGEPLRIGVG. 32-39 contacts GTP; it reads GPVGSGKT.

Belongs to the SIMIBI class G3E GTPase family. UreG subfamily. As to quaternary structure, homodimer. UreD, UreF and UreG form a complex that acts as a GTP-hydrolysis-dependent molecular chaperone, activating the urease apoprotein by helping to assemble the nickel containing metallocenter of UreC. The UreE protein probably delivers the nickel.

The protein resides in the cytoplasm. In terms of biological role, facilitates the functional incorporation of the urease nickel metallocenter. This process requires GTP hydrolysis, probably effectuated by UreG. This chain is Urease accessory protein UreG, found in Mycobacterium marinum (strain ATCC BAA-535 / M).